A 567-amino-acid chain; its full sequence is Inactive protein kinase SELMODRAFT_444075 (567 aa).

The segment at 148 to 206 (NETRRKGPSPSEVLNSTTSSPASHKPQVLNDFLRMKESREYTEETDTQRNVSRPVDRVS) is disordered. A compositionally biased stretch (polar residues) spans 159 to 169 (EVLNSTTSSPA). A compositionally biased stretch (basic and acidic residues) spans 180 to 189 (LRMKESREYT). Positions 196-206 (RNVSRPVDRVS) are enriched in low complexity. Positions 255 to 487 (FSDVNFLAEG…EGDSLSDTSL (233 aa)) constitute a Protein kinase domain. ATP-binding positions include 261–269 (LAEGGYGSV) and Lys-283. Residues 511–538 (DSSSSRSSSASSVLKSFSRTQHSSRSSS) are compositionally biased toward low complexity. Positions 511-567 (DSSSSRSSSASSVLKSFSRTQHSSRSSSNAGSPLNPAATQALAFKKYNKNTTRHTQD) are disordered. Residues 556–567 (KYNKNTTRHTQD) are compositionally biased toward basic residues.

This is Inactive protein kinase SELMODRAFT_444075 from Selaginella moellendorffii (Spikemoss).